Consider the following 341-residue polypeptide: Trans-3-hydroxy-L-proline dehydratase (341 aa).

The active-site Proton acceptor is Ser90. Substrate is bound by residues 91–92 (GS), Asp252, and 257–258 (GT).

The protein belongs to the proline racemase family.

It catalyses the reaction trans-3-hydroxy-L-proline = 1-pyrroline-2-carboxylate + H2O. Functionally, catalyzes the dehydration of trans-3-hydroxy-L-proline (t3LHyp) to Delta(1)-pyrroline-2-carboxylate (Pyr2C). May be involved in a degradation pathway of t3LHyp, which would allow L.aggregata to grow on t3LHyp as a sole carbon source. Displays neither proline racemase activity nor 4-hydroxyproline 2-epimerase activity. This chain is Trans-3-hydroxy-L-proline dehydratase, found in Roseibium aggregatum (strain ATCC 25650 / DSM 13394 / JCM 20685 / NBRC 16684 / NCIMB 2208 / IAM 12614 / B1) (Stappia aggregata).